Consider the following 495-residue polypeptide: MSTAAKQNRSTSRVSKKKTAAPKEGAAKKSDKGHKYEYVELAKASLTSAQPQHFYAVVIDATFPYKTNQERYICSLKIVDPTLYLKQQKGAGDASDYATLVLYAKRFEDLPIIHRAGDIIRVHRATLRLYNGQRQFNANVFYSSSWALFSTDKRSVTQEINNQDAVSDTTPFSFSSKHATIEKNEISILQNLRKWANQYFSSYSVISSDMYTALNKAQAQKGDFDVVAKILQVHELDEYTNELKLKDASGQVFYTLSLKLKFPHVRTGEVVRIRSATYDETSTQKKVLILSHYSNIITFIQSSKLAKELRAKIQDDHSVEVASLKKNVSLNAVVLTEVDKKHAALPSTSLQDLFHHADSDKELQAQDTFRTQFYVTKIEPSDVKEWVKGYDRKTKKSSSLKGASGKGDNIFQVQFLVKDASTQLNNNTYRVLLYTQDGLGANFFNVKADNLHKNADARKKLEDSAELLTKFNSYVDAVVERRNGFYLIKDTKLIY.

The span at 1 to 13 shows a compositional bias: polar residues; the sequence is MSTAAKQNRSTSR. A disordered region spans residues 1 to 31; that stretch reads MSTAAKQNRSTSRVSKKKTAAPKEGAAKKSD.

It belongs to the telombin family. As to quaternary structure, heterodimer of an alpha and a beta subunit.

Its subcellular location is the nucleus. The protein resides in the chromosome. It is found in the telomere. May function as protective capping of the single-stranded telomeric overhang. May also participate in telomere length regulation during DNA replication. Binds specifically to the T4G4-containing extension on the 3'strand and protects this region of the telomere from nuclease digestion and chemical modification. This chain is Telomere-binding protein subunit alpha (MAC-56A), found in Sterkiella nova (Ciliate).